The sequence spans 134 residues: ATP synthase epsilon chain (134 aa).

Belongs to the ATPase epsilon chain family. As to quaternary structure, F-type ATPases have 2 components, CF(1) - the catalytic core - and CF(0) - the membrane proton channel. CF(1) has five subunits: alpha(3), beta(3), gamma(1), delta(1), epsilon(1). CF(0) has three main subunits: a, b and c.

Its subcellular location is the cell inner membrane. In terms of biological role, produces ATP from ADP in the presence of a proton gradient across the membrane. The chain is ATP synthase epsilon chain from Sinorhizobium fredii (strain NBRC 101917 / NGR234).